The sequence spans 78 residues: Acyl carrier protein AcpP (78 aa).

One can recognise a Carrier domain in the interval 2–77 (SDTAERVKKI…DAVKYIDKAS (76 aa)). Position 37 is an O-(pantetheine 4'-phosphoryl)serine (serine 37).

The protein belongs to the acyl carrier protein (ACP) family. In terms of processing, 4'-phosphopantetheine is transferred from CoA to a specific serine of apo-ACP by AcpS. This modification is essential for activity because fatty acids are bound in thioester linkage to the sulfhydryl of the prosthetic group.

The protein resides in the cytoplasm. Its pathway is lipid metabolism; fatty acid biosynthesis. Carrier of the growing fatty acid chain in fatty acid biosynthesis. The protein is Acyl carrier protein AcpP of Mesorhizobium japonicum (strain LMG 29417 / CECT 9101 / MAFF 303099) (Mesorhizobium loti (strain MAFF 303099)).